We begin with the raw amino-acid sequence, 143 residues long: Endoribonuclease YbeY (143 aa).

3 residues coordinate Zn(2+): histidine 111, histidine 115, and aspartate 121.

Belongs to the endoribonuclease YbeY family. Zn(2+) serves as cofactor.

Its subcellular location is the cytoplasm. Its function is as follows. Single strand-specific metallo-endoribonuclease involved in late-stage 70S ribosome quality control and in maturation of the 3' terminus of the 16S rRNA. The sequence is that of Endoribonuclease YbeY from Cytophaga hutchinsonii (strain ATCC 33406 / DSM 1761 / CIP 103989 / NBRC 15051 / NCIMB 9469 / D465).